The primary structure comprises 318 residues: Molybdenum cofactor insertion chaperone PaoD (318 aa).

Homodimer in solution. Interacts with MocA.

In terms of biological role, chaperone required for the production of an active PaoABC aldehyde oxidoreductase. Stabilizes the PaoC subunit and is required for the insertion of the molybdenum cofactor into this subunit. Binds molybdenum cofactor. Binds the molybdopterin cytosine dinucleotide (MCD) form of the cofactor after its formation by the molybdenum cofactor cytidylyltransferase MocA. In Escherichia coli (strain K12), this protein is Molybdenum cofactor insertion chaperone PaoD.